Consider the following 259-residue polypeptide: Thiazole synthase (259 aa).

The Schiff-base intermediate with DXP role is filled by Lys99. 1-deoxy-D-xylulose 5-phosphate is bound by residues Gly161, 187–188 (AG), and 209–219 (NSAIACAQNPI).

Belongs to the ThiG family. In terms of assembly, homotetramer. Forms heterodimers with either ThiH or ThiS.

The protein resides in the cytoplasm. It carries out the reaction [ThiS sulfur-carrier protein]-C-terminal-Gly-aminoethanethioate + 2-iminoacetate + 1-deoxy-D-xylulose 5-phosphate = [ThiS sulfur-carrier protein]-C-terminal Gly-Gly + 2-[(2R,5Z)-2-carboxy-4-methylthiazol-5(2H)-ylidene]ethyl phosphate + 2 H2O + H(+). The protein operates within cofactor biosynthesis; thiamine diphosphate biosynthesis. Functionally, catalyzes the rearrangement of 1-deoxy-D-xylulose 5-phosphate (DXP) to produce the thiazole phosphate moiety of thiamine. Sulfur is provided by the thiocarboxylate moiety of the carrier protein ThiS. In vitro, sulfur can be provided by H(2)S. The protein is Thiazole synthase of Aliarcobacter butzleri (strain RM4018) (Arcobacter butzleri).